The chain runs to 597 residues: Zinc finger CCCH domain-containing protein 29 (597 aa).

ANK repeat units follow at residues 76-106 (EERT…DVNR) and 111-143 (EKVT…SPNC). C3H1-type zinc fingers lie at residues 254-281 (PYTC…HGVF) and 289-313 (QYRT…HRRD). Over residues 320–337 (ASTGSAMVSPRSSNQSPE) the composition is skewed to polar residues. The disordered stretch occupies residues 320–341 (ASTGSAMVSPRSSNQSPEMSVM).

As to expression, expressed in roots and anthers.

The protein localises to the nucleus. Its function is as follows. Involved in salt stress response. May positively modulate plant tolerance to salt stress. In Arabidopsis thaliana (Mouse-ear cress), this protein is Zinc finger CCCH domain-containing protein 29.